The following is a 270-amino-acid chain: MDWKTLQALLSGVNKYSTAFGRIWLSVVFVFRVLVYVVAAERVWGDEQKDFDCNTKQPGCTNVCYDNYFPISNIRLWALQLIFVTCPSLLVILHVAYREERERRHRQKHGDQCAKLYDNAGKKHGGLWWTYLFSLIFKLIIEFLFLYLLHTLWHGFNMPRLVQCANVAPCPNIVDCYIARPTEKKIFTYFMVGASAVCIVLTICELCYLICHRVLRGLHKDKPRGGCSPSSSASRASTCRCHHKLVEAGEVDPDPGNNKLQASAPNLTPI.

Topologically, residues 1–20 (MDWKTLQALLSGVNKYSTAF) are cytoplasmic. A helical membrane pass occupies residues 21–40 (GRIWLSVVFVFRVLVYVVAA). Over 41–75 (ERVWGDEQKDFDCNTKQPGCTNVCYDNYFPISNIR) the chain is Extracellular. The helical transmembrane segment at 76–98 (LWALQLIFVTCPSLLVILHVAYR) threads the bilayer. The Cytoplasmic portion of the chain corresponds to 99–126 (EERERRHRQKHGDQCAKLYDNAGKKHGG). Residues 127–149 (LWWTYLFSLIFKLIIEFLFLYLL) form a helical membrane-spanning segment. Residues 150-187 (HTLWHGFNMPRLVQCANVAPCPNIVDCYIARPTEKKIF) are Extracellular-facing. A helical membrane pass occupies residues 188-210 (TYFMVGASAVCIVLTICELCYLI). The Cytoplasmic segment spans residues 211–270 (CHRVLRGLHKDKPRGGCSPSSSASRASTCRCHHKLVEAGEVDPDPGNNKLQASAPNLTPI). The disordered stretch occupies residues 250–270 (EVDPDPGNNKLQASAPNLTPI). A compositionally biased stretch (polar residues) spans 258 to 270 (NKLQASAPNLTPI).

It belongs to the connexin family. Beta-type (group I) subfamily. In terms of assembly, a connexon is composed of a hexamer of connexins. Interacts with CNST.

It localises to the cell membrane. The protein resides in the cell junction. Its subcellular location is the gap junction. Its function is as follows. One gap junction consists of a cluster of closely packed pairs of transmembrane channels, the connexons, through which materials of low MW diffuse from one cell to a neighboring cell. This Homo sapiens (Human) protein is Gap junction beta-3 protein (GJB3).